A 118-amino-acid chain; its full sequence is Alpha-amylase inhibitor 4 (118 aa).

4 cysteine pairs are disulfide-bonded: cysteine 7–cysteine 60, cysteine 21–cysteine 49, cysteine 30–cysteine 82, and cysteine 50–cysteine 101.

Belongs to the protease inhibitor I6 (cereal trypsin/alpha-amylase inhibitor) family.

Its subcellular location is the secreted. Alpha-amylase inhibitor. This Sorghum bicolor (Sorghum) protein is Alpha-amylase inhibitor 4.